A 427-amino-acid chain; its full sequence is Trigger factor (427 aa).

Residues 163–248 (GDTVVIDFVG…VHEVKAKEVP (86 aa)) enclose the PPIase FKBP-type domain.

Belongs to the FKBP-type PPIase family. Tig subfamily.

The protein localises to the cytoplasm. The enzyme catalyses [protein]-peptidylproline (omega=180) = [protein]-peptidylproline (omega=0). In terms of biological role, involved in protein export. Acts as a chaperone by maintaining the newly synthesized protein in an open conformation. Functions as a peptidyl-prolyl cis-trans isomerase. This Streptococcus equi subsp. equi (strain 4047) protein is Trigger factor.